Consider the following 162-residue polypeptide: Ribose-5-phosphate isomerase B (162 aa).

D-ribulose 5-phosphate contacts are provided by residues 11–12 and 70–74; these read DH and GSGNG. The active-site Proton acceptor is glutamate 75. The active-site Proton donor is the histidine 102. The D-ribulose 5-phosphate site is built by asparagine 103, arginine 113, arginine 137, and arginine 141.

The protein belongs to the LacAB/RpiB family. As to quaternary structure, homodimer.

The enzyme catalyses aldehydo-D-ribose 5-phosphate = D-ribulose 5-phosphate. Its pathway is carbohydrate degradation; pentose phosphate pathway; D-ribose 5-phosphate from D-ribulose 5-phosphate (non-oxidative stage): step 1/1. Functionally, catalyzes the interconversion of ribulose-5-P and ribose-5-P. The sequence is that of Ribose-5-phosphate isomerase B from Mycobacterium bovis (strain ATCC BAA-935 / AF2122/97).